A 484-amino-acid polypeptide reads, in one-letter code: T-complex protein 1 subunit delta (484 aa).

The protein belongs to the TCP-1 chaperonin family. Component of the T-complex protein 1 (TCP1) complex.

The protein resides in the cytoplasm. Functionally, molecular chaperone; assists the folding of proteins upon ATP hydrolysis. This is T-complex protein 1 subunit delta (CCT4) from Encephalitozoon cuniculi (strain GB-M1) (Microsporidian parasite).